The sequence spans 419 residues: Keratin, type II cytoskeletal I (419 aa).

Residues 1-16 form a linker 1 region; sequence KGSTKRANLDPLFEKY. In terms of domain architecture, IF rod spans 1 to 275; it reads KGSTKRANLD…YMLEGEEGRM (275 aa). The coil 1B stretch occupies residues 17–108; that stretch reads ISDLKRYLDN…TLFAAELSQV (92 aa). A linker 12 region spans residues 109–132; sequence HDQVTDTSVVLTMDNNRDLNLDSI. A coil 2 region spans residues 133 to 271; that stretch reads IKEVKCQYEQ…STYRYMLEGE (139 aa). The tail stretch occupies residues 272-419; it reads EGRMSGQISN…STTSTTKRSY (148 aa).

The protein belongs to the intermediate filament family. Heterotetramer of two type I and two type II keratins.

The chain is Keratin, type II cytoskeletal I from Xenopus laevis (African clawed frog).